Reading from the N-terminus, the 231-residue chain is Ferritin light chain (231 aa).

The N-terminal stretch at 1–19 is a signal peptide; sequence MKMLILAVSCLLAITGSLA. The cysteines at positions 23 and 43 are disulfide-linked. Residues 50-208 form the Ferritin-like diiron domain; sequence YGSHGNVATE…GHTSDLKKFI (159 aa). Asparagine 134 carries an N-linked (GlcNAc...) asparagine glycan.

This sequence belongs to the ferritin family. In terms of assembly, oligomer of 12 light (L) chains and 12 heavy (H) chains; L and H chains are disulfide-linked. The functional molecule forms a roughly spherical shell with a diameter of 12 nm and contains a central cavity into which the insoluble ferric iron core is deposited.

It localises to the golgi apparatus. The protein resides in the secreted. In terms of biological role, stores iron in a soluble, non-toxic, readily available form. Important for iron homeostasis. Iron is taken up in the ferrous form and deposited as ferric hydroxides after oxidation. Ferritin is composed of a heavy (H) chain which is responsible for the oxidation and uptake of ferrous iron, and a light (L) chain which facilitates the nucleation of the ferrihydrite iron core. This is Ferritin light chain from Trichoplusia ni (Cabbage looper).